The primary structure comprises 350 residues: Hydroxymethylglutaryl-CoA synthase (350 aa).

E83 acts as the Proton donor/acceptor in catalysis. Residue C115 is the Acyl-thioester intermediate of the active site. C115 and T156 together coordinate (3S)-3-hydroxy-3-methylglutaryl-CoA. Position 204 (R204) interacts with CoA. Positions 206 and 239 each coordinate (3S)-3-hydroxy-3-methylglutaryl-CoA. Catalysis depends on H239, which acts as the Proton donor/acceptor. K244 is a binding site for CoA. N271 and S301 together coordinate (3S)-3-hydroxy-3-methylglutaryl-CoA.

This sequence belongs to the thiolase-like superfamily. Archaeal HMG-CoA synthase family. As to quaternary structure, interacts with acetoacetyl-CoA thiolase that catalyzes the precedent step in the pathway and with a DUF35 protein. The acetoacetyl-CoA thiolase/HMG-CoA synthase complex channels the intermediate via a fused CoA-binding site, which allows for efficient coupling of the endergonic thiolase reaction with the exergonic HMGCS reaction.

The catalysed reaction is acetoacetyl-CoA + acetyl-CoA + H2O = (3S)-3-hydroxy-3-methylglutaryl-CoA + CoA + H(+). Its pathway is metabolic intermediate biosynthesis; (R)-mevalonate biosynthesis; (R)-mevalonate from acetyl-CoA: step 2/3. Catalyzes the condensation of acetyl-CoA with acetoacetyl-CoA to form 3-hydroxy-3-methylglutaryl-CoA (HMG-CoA). Functions in the mevalonate (MVA) pathway leading to isopentenyl diphosphate (IPP), a key precursor for the biosynthesis of isoprenoid compounds that are building blocks of archaeal membrane lipids. The protein is Hydroxymethylglutaryl-CoA synthase of Pyrococcus horikoshii (strain ATCC 700860 / DSM 12428 / JCM 9974 / NBRC 100139 / OT-3).